A 726-amino-acid polypeptide reads, in one-letter code: Disintegrin and metalloproteinase domain-containing protein 20 (726 aa).

Residues 1-31 (MAVGEPLVHIRVTLLLLWFGMFLSISGHSQA) form the signal peptide. Residues 32–206 (RPSQYFTSPE…SSFVGWWTHQ (175 aa)) constitute a propeptide that is removed on maturation. The Cysteine switch signature appears at 171 to 178 (MRCGLTEE). Residue Cys173 participates in Zn(2+) binding. Residues Asn191 and Asn226 are each glycosylated (N-linked (GlcNAc...) asparagine). The Peptidase M12B domain maps to 207-400 (RFVELVVVVD…SGLCIQPPPY (194 aa)). Residues 207 to 693 (RFVELVVVVD…GLNVMGKLRY (487 aa)) are Extracellular-facing. 3 cysteine pairs are disulfide-bonded: Cys317-Cys394, Cys357-Cys379, and Cys359-Cys364. Residue His342 coordinates Zn(2+). Glu343 is a catalytic residue. Zn(2+)-binding residues include His346 and His352. 4 N-linked (GlcNAc...) asparagine glycosylation sites follow: Asn378, Asn438, Asn479, and Asn587. In terms of domain architecture, Disintegrin spans 407-493 (LKYCGNLVVE…QCPDDVYVQD (87 aa)). Residues Cys465 and Cys485 are joined by a disulfide bond. 3 disulfides stabilise this stretch: Cys635–Cys646, Cys640–Cys652, and Cys654–Cys663. Positions 635-663 (CQPKTCNMRGICNNKQHCHCNHEWAPPYC) constitute an EGF-like domain. A helical transmembrane segment spans residues 694 to 714 (LSLLCLLPLVAFLLFCLHVLF). The Cytoplasmic segment spans residues 715-726 (KKRTKSKEDEEG).

Zn(2+) is required as a cofactor. Has no obvious cleavage site for furin endopeptidase, suggesting that the proteolytic processing is regulated. Testis specific.

It localises to the membrane. Its function is as follows. May be involved in sperm maturation and/or fertilization. The protein is Disintegrin and metalloproteinase domain-containing protein 20 (ADAM20) of Homo sapiens (Human).